The following is a 206-amino-acid chain: MTDTAASASQPALVRNELNLVWLDMEMTGLDPDNDRIIEIAVVVTNSTLDIAVEGPVFAIHQSDETLAKMDDWNKSTHGRSGLIDRVRASTVTEAEAAAQLQAFLAQYVSPGKSPMCGNSICQDRRFMARWMPEFERFFHYRNLDVSTLKELCRRWQPAIYKGFQKRAMHTALADIHESIDELKYYREHFLIPAASVSAGESAPAA.

The Exonuclease domain maps to 20-183 (LVWLDMEMTG…ADIHESIDEL (164 aa)). Tyr141 is an active-site residue.

This sequence belongs to the oligoribonuclease family.

The protein localises to the cytoplasm. In terms of biological role, 3'-to-5' exoribonuclease specific for small oligoribonucleotides. In Burkholderia cenocepacia (strain HI2424), this protein is Oligoribonuclease.